The following is a 176-amino-acid chain: B9 domain-containing protein 2 (176 aa).

The 117-residue stretch at 2–118 folds into the C2 B9-type domain; sequence AEVHIIGQII…LSPTWRPLGT (117 aa).

It belongs to the B9D family. Part of the tectonic-like complex (also named B9 complex).

It localises to the cytoplasm. Its subcellular location is the cytoskeleton. The protein localises to the cilium basal body. It is found in the cilium axoneme. Its function is as follows. Component of the tectonic-like complex, a complex localized at the transition zone of primary cilia and acting as a barrier that prevents diffusion of transmembrane proteins between the cilia and plasma membranes. The polypeptide is B9 domain-containing protein 2 (b9d2) (Xenopus laevis (African clawed frog)).